Here is a 174-residue protein sequence, read N- to C-terminus: Gamma-crystallin D (174 aa).

2 consecutive Beta/gamma crystallin 'Greek key' domains span residues 2–40 (GKITLYEDRGFQGRHYECSSDHPNLQPYLSRCNSARVDS) and 41–83 (GCWM…RLIP). A connecting peptide region spans residues 84 to 87 (HSGS). 2 Beta/gamma crystallin 'Greek key' domains span residues 88–128 (HRIR…NVLE) and 129–171 (GSWV…RRVI).

This sequence belongs to the beta/gamma-crystallin family. As to quaternary structure, monomer.

In terms of biological role, crystallins are the dominant structural components of the vertebrate eye lens. This chain is Gamma-crystallin D (CRYGD), found in Homo sapiens (Human).